The chain runs to 66 residues: Xenoxin-3 (66 aa).

4 disulfides stabilise this stretch: Cys-3–Cys-24, Cys-17–Cys-37, Cys-43–Cys-58, and Cys-59–Cys-64.

Expressed by the skin dorsal glands.

It localises to the secreted. In terms of biological role, lacks alpha-neurotoxic activity, has apparently no antibacterial activity, nor anti-coagulant potency. The sequence is that of Xenoxin-3 from Xenopus laevis (African clawed frog).